The chain runs to 188 residues: MKVIASSIRKGNVIEQDGKLYVVVTAENIHPGKGTPVSQIEMRRISDGVKISERYKTTDQVEKVTIEERNYTYLYEDPDGFHFMNPETYDQVLVPKDVVGSQAAYLQENMTVKLSMHDVVPVSIALPQRVTLEVVDTEPVTKGQTASSSYKPAVLSNGVRTGVPPHITVGTRIVVMTEDGSYCERAKD.

Belongs to the elongation factor P family.

It localises to the cytoplasm. The protein operates within protein biosynthesis; polypeptide chain elongation. Involved in peptide bond synthesis. Stimulates efficient translation and peptide-bond synthesis on native or reconstituted 70S ribosomes in vitro. Probably functions indirectly by altering the affinity of the ribosome for aminoacyl-tRNA, thus increasing their reactivity as acceptors for peptidyl transferase. The polypeptide is Elongation factor P (Bradyrhizobium sp. (strain BTAi1 / ATCC BAA-1182)).